The chain runs to 338 residues: UDP-glucose 4-epimerase (338 aa).

NAD(+) is bound by residues 11–12 (YI), 31–36 (DNLCNS), 58–59 (DI), 80–84 (FAGLK), Asn-99, Ser-124, Tyr-149, Lys-153, and Phe-178. Ser-124 and Tyr-149 together coordinate substrate. The active-site Proton acceptor is Tyr-149. Residues Asn-179, 199–200 (NL), 216–218 (AIF), Arg-231, 292–295 (REGD), and Tyr-299 each bind substrate.

This sequence belongs to the NAD(P)-dependent epimerase/dehydratase family. In terms of assembly, homodimer. It depends on NAD(+) as a cofactor.

It carries out the reaction UDP-alpha-D-glucose = UDP-alpha-D-galactose. The protein operates within carbohydrate metabolism; galactose metabolism. Inhibited by UDP-phenol and NaBH3CN. Its function is as follows. Involved in the metabolism of galactose. Catalyzes the conversion of UDP-galactose (UDP-Gal) to UDP-glucose (UDP-Glc) through a mechanism involving the transient reduction of NAD. It is only active on UDP-galactose and UDP-glucose. This Escherichia coli (strain K12) protein is UDP-glucose 4-epimerase (galE).